A 1453-amino-acid polypeptide reads, in one-letter code: Collagen alpha-1(I) chain (1453 aa).

The N-terminal stretch at 1-22 (MFSFVDLRLLLLLGATALLTHG) is a signal peptide. The propeptide at 23–151 (QEDIPEVSCI…PPGLGGNFAS (129 aa)) is N-terminal propeptide. In terms of domain architecture, VWFC spans 29-87 (VSCIHNGLRVPNGETWKPEVCLICICHNGTAVCDDVQCNEELDCPNPQRREGECCAFCP). N-linked (GlcNAc...) asparagine glycosylation is present at Asn-56. A disordered region spans residues 94–1210 (NSEDVGVEGP…GGRYYRADDA (1117 aa)). Pro residues-rich tracts occupy residues 109–118 (PQGPRGPVGP) and 128–143 (PGLPGPPGPPGPPGPP). Positions 152-167 (QMSYGYDEKSAGVSVP) are nonhelical region (N-terminal). Lys-160 bears the Allysine mark. Ser-161 is subject to Phosphoserine. Residues 168–1181 (GPMGPSGPRG…PGPPGPPGPP (1014 aa)) form a triple-helical region region. Residues Pro-179, Pro-182, Pro-185, Pro-194, Pro-197, Pro-200, Pro-215, Pro-230, Pro-236, Pro-245, and Pro-251 each carry the 4-hydroxyproline modification. The segment covering 198–207 (GEPGGSGPMG) has biased composition (gly residues). The span at 218 to 232 (NGDDGEAGKPGRPGE) shows a compositional bias: basic and acidic residues. Lys-254 is modified (5-hydroxylysine; alternate). A glycan (O-linked (Gal...) hydroxylysine; alternate) is linked at Lys-254. At Ser-260 the chain carries Phosphoserine. Residues 268 to 284 (DAGPAGPKGEPGSPGEN) are compositionally biased toward low complexity. 4-hydroxyproline occurs at positions 278, 281, 287, 296, and 302. The span at 307 to 320 (TAGARGNDGAVGAA) shows a compositional bias: low complexity. Pro residues predominate over residues 322–334 (PPGPTGPTGPPGF). Pro-323, Pro-332, Pro-335, Pro-362, Pro-365, Pro-377, Pro-383, Pro-392, Pro-398, Pro-401, and Pro-416 each carry 4-hydroxyproline. Low complexity predominate over residues 368–407 (AGAAGPAGNPGADGQPGAKGANGAPGIAGAPGFPGARGPS). Lys-419 carries the post-translational modification 5-hydroxylysine. 4-hydroxyproline is present on residues Pro-425, Pro-428, Pro-440, Pro-449, Pro-464, Pro-470, Pro-479, and Pro-485. The segment covering 474-483 (GERGGPGSRG) has biased composition (gly residues). Lys-494 carries the 5-hydroxylysine modification. Over residues 499–515 (ERGAPGPAGPKGSPGEA) the composition is skewed to low complexity. A 4-hydroxyproline mark is found at Pro-503, Pro-512, Pro-518, Pro-524, Pro-533, Pro-536, Pro-545, Pro-554, Pro-560, Pro-572, Pro-581, Pro-590, Pro-593, Pro-611, Pro-629, Pro-635, Pro-641, Pro-647, Pro-653, Pro-659, Pro-671, Pro-680, Pro-692, Pro-704, Pro-707, Pro-713, Pro-719, and Pro-728. Residues 527-566 (KGLTGSPGSPGPDGKTGPPGPAGQDGRPGPAGPPGARGQA) are compositionally biased toward low complexity. Low complexity predominate over residues 623–650 (QGPAGSPGFQGLPGPAGPPGEAGKPGEQ). Composition is skewed to low complexity over residues 685 to 695 (PRGNNGAPGND) and 703 to 716 (APGAPGSQGAPGLQ). A Cell attachment site motif is present at residues 734–736 (RGD). Residue Lys-740 is modified to 5-hydroxylysine. Residues Pro-746, Pro-761, and Pro-767 each carry the 4-hydroxyproline modification. Residue Ser-776 is modified to Phosphoserine. 4-hydroxyproline is present on residues Pro-788, Pro-797, Pro-806, Pro-812, Pro-830, Pro-839, and Pro-848. Residues 800 to 815 (AGFAGPPGADGQPGAK) are compositionally biased toward low complexity. Pro residues predominate over residues 829–841 (PPGPAGPAGPPGP). Positions 842-872 (IGNVGAPGPKGPRGAAGPPGATGFPGAAGRV) are enriched in low complexity. A 5-hydroxylysine modification is found at Lys-851. 4-hydroxyproline is present on residues Pro-860 and Pro-866. A 3-hydroxyproline modification is found at Pro-874. 4-hydroxyproline occurs at positions 875, 884, 887, 908, 917, 926, 935, 953, 962, 965, 971, 986, 992, 998, 1007, and 1013. Over residues 901–910 (ETGPAGRPGE) the composition is skewed to low complexity. Over residues 920-935 (AGEKGSPGADGPAGSP) the composition is skewed to low complexity. Positions 985-995 (PPGPMGPPGLA) are enriched in pro residues. Positions 997-1012 (PPGESGREGSPGAEGS) are enriched in low complexity. The residue at position 1022 (Lys-1022) is a 5-hydroxylysine. Positions 1031–1046 (AGPPGAPGAPGAPGPV) are enriched in pro residues. Residues Pro-1034, Pro-1037, and Pro-1040 each carry the 4-hydroxyproline modification. The segment covering 1067–1081 (IGPAGARGPAGPQGP) has biased composition (low complexity). A Cell attachment site motif is present at residues 1082 to 1084 (RGD). The segment covering 1082–1096 (RGDKGETGEQGDRGI) has biased composition (basic and acidic residues). 5-hydroxylysine is present on Lys-1085. Lys-1097 is subject to 5-hydroxylysine; alternate. The O-linked (Gal...) hydroxylysine; alternate glycan is linked to Lys-1097. Over residues 1102–1148 (FSGLQGPPGSPGSPGEQGPSGASGPAGPRGPPGSAGSPGKDGLNGLP) the composition is skewed to low complexity. 4-hydroxyproline is present on residues Pro-1109, Pro-1112, Pro-1115, Pro-1133, and Pro-1148. Pro-1153 carries the post-translational modification 3-hydroxyproline. At Pro-1154 the chain carries 4-hydroxyproline. Over residues 1166–1181 (AGPPGPPGPPGPPGPP) the composition is skewed to pro residues. Pro-1168 bears the 3-hydroxyproline mark. Residue Pro-1169 is modified to 4-hydroxyproline. Pro-1171 carries the post-translational modification 3-hydroxyproline. The residue at position 1172 (Pro-1172) is a 4-hydroxyproline. Pro-1174 is modified (3-hydroxyproline). 4-hydroxyproline occurs at positions 1175, 1178, and 1181. Residues 1182–1207 (SGGYDFSFLPQPPQEKSQDGGRYYRA) are nonhelical region (C-terminal). Lys-1197 is modified (allysine). Residues 1197–1210 (KSQDGGRYYRADDA) show a composition bias toward basic and acidic residues. The propeptide at 1208–1453 (DDANVVRDRD…GLDIGPACFV (246 aa)) is C-terminal propeptide. Residues 1218-1453 (LEVDTTLKSL…GLDIGPACFV (236 aa)) form the Fibrillar collagen NC1 domain. Cystine bridges form between Cys-1248–Cys-1280, Cys-1288–Cys-1451, and Cys-1359–Cys-1404. Ca(2+)-binding residues include Asp-1266, Asn-1268, Gln-1269, Cys-1271, and Asp-1274. Asn-1354 carries N-linked (GlcNAc...) asparagine glycosylation.

Belongs to the fibrillar collagen family. In terms of assembly, trimers of one alpha 2(I) and two alpha 1(I) chains. Interacts with MRC2. Interacts with TRAM2. Interacts with MFAP4 in a Ca (2+)-dependent manner. Post-translationally, contains mostly 4-hydroxyproline. Proline residues at the third position of the tripeptide repeating unit (G-X-Y) are hydroxylated in some or all of the chains. Contains 3-hydroxyproline at a few sites. This modification occurs on the first proline residue in the sequence motif Gly-Pro-Hyp, where Hyp is 4-hydroxyproline. In terms of processing, lysine residues at the third position of the tripeptide repeating unit (G-X-Y) are 5-hydroxylated in some or all of the chains. Post-translationally, O-glycosylated on hydroxylated lysine residues. The O-linked glycan consists of a Glc-Gal disaccharide. As to expression, forms the fibrils of tendon, ligaments and bones. In bones the fibrils are mineralized with calcium hydroxyapatite.

The protein localises to the secreted. It is found in the extracellular space. Its subcellular location is the extracellular matrix. Functionally, type I collagen is a member of group I collagen (fibrillar forming collagen). This Mus musculus (Mouse) protein is Collagen alpha-1(I) chain.